A 369-amino-acid chain; its full sequence is Putative protein FAM10A5 (369 aa).

The interval 38–98 (MGGKVPPATQ…IEPDTDAPQE (61 aa)) is disordered. Residues 49–73 (AKSEENTKEEKPDSKKVEEDLKADE) show a composition bias toward basic and acidic residues. Positions 89-98 (IEPDTDAPQE) are enriched in acidic residues. TPR repeat units lie at residues 114-147 (ANDK…NPRL), 149-181 (ILYA…NPDS), and 183-215 (QPYK…DYDE). A compositionally biased stretch (basic and acidic residues) spans 256-272 (KAQEEQERAQREEEARR). A disordered region spans residues 256–300 (KAQEEQERAQREEEARRQSGAHYGPFPGGFPGGMPGNFPGGMPGM). A compositionally biased stretch (gly residues) spans 281 to 300 (FPGGFPGGMPGNFPGGMPGM). Residues 319 to 358 (DPEALAAMQDPEVMVAFQDVAQNPANMSKYQSNPKVMNLI) enclose the STI1 domain. Position 346 is a phosphoserine (Ser-346). 2 positions are modified to N6-acetyllysine: Lys-353 and Lys-360.

Belongs to the FAM10 family.

It localises to the cytoplasm. This chain is Putative protein FAM10A5 (ST13P5), found in Homo sapiens (Human).